Here is a 146-residue protein sequence, read N- to C-terminus: Protein E6 (146 aa).

Zinc fingers lie at residues Cys27–Cys63 and Cys100–Cys136.

This sequence belongs to the papillomaviridae E6 protein family. Forms homodimers. Interacts with ubiquitin-protein ligase UBE3A/E6-AP; this interaction stimulates UBE3A ubiquitin activity. Interacts with host TP53 and EP300; this interaction inhibits TP53 activity.

Its subcellular location is the host cytoplasm. It is found in the host nucleus. Its function is as follows. Plays a major role in the induction and maintenance of cellular transformation. E6 associates with host UBE3A/E6-AP ubiquitin-protein ligase and modulates its activity. Sequesters tumor suppressor TP53 in the host cytoplasm and modulates its activity by interacting with host EP300 that results in the reduction of TP53 acetylation and activation. In turn, apoptosis induced by DNA damage is inhibited. E6 also protects host keratinocytes from apoptosis by mediating the degradation of host BAK1. May also inhibit host immune response. The protein is Protein E6 of Human papillomavirus type 61.